A 523-amino-acid chain; its full sequence is GMP synthase [glutamine-hydrolyzing] (523 aa).

One can recognise a Glutamine amidotransferase type-1 domain in the interval 8-205 (KILILDFGSQ…VVNICGCETK (198 aa)). The active-site Nucleophile is the C85. Active-site residues include H179 and E181. Residues 206 to 398 (WTAENIIEDA…LGLPAEMINR (193 aa)) form the GMPS ATP-PPase domain. 233 to 239 (SGGVDSS) serves as a coordination point for ATP.

In terms of assembly, homodimer.

The catalysed reaction is XMP + L-glutamine + ATP + H2O = GMP + L-glutamate + AMP + diphosphate + 2 H(+). It participates in purine metabolism; GMP biosynthesis; GMP from XMP (L-Gln route): step 1/1. Catalyzes the synthesis of GMP from XMP. This is GMP synthase [glutamine-hydrolyzing] from Haemophilus influenzae (strain 86-028NP).